Consider the following 367-residue polypeptide: uncharacterized protein (367 aa).

4 helical membrane passes run 18–38 (ILAL…GILG), 239–259 (VSYF…IGIG), 296–316 (ILGV…GYLI), and 329–349 (AIFY…ISAL).

This sequence belongs to the ABC-4 integral membrane protein family.

Its subcellular location is the cell membrane. This is an uncharacterized protein from Methanocaldococcus jannaschii (strain ATCC 43067 / DSM 2661 / JAL-1 / JCM 10045 / NBRC 100440) (Methanococcus jannaschii).